The chain runs to 334 residues: Holliday junction branch migration complex subunit RuvB (334 aa).

The large ATPase domain (RuvB-L) stretch occupies residues 4-184 (ADRLIQPQLQ…FGIPLRLEFY (181 aa)). ATP contacts are provided by residues Arg-24, Gly-65, Lys-68, Thr-69, Thr-70, 131-133 (EDY), Arg-174, Tyr-184, and Arg-221. Thr-69 is a Mg(2+) binding site. Positions 185-255 (NVKDLSTIVT…VAEHALDLLD (71 aa)) are small ATPAse domain (RuvB-S). The segment at 258–334 (GEGFDYMDRK…YLHFGMIKPE (77 aa)) is head domain (RuvB-H). DNA contacts are provided by Arg-294, Arg-313, and Arg-318.

The protein belongs to the RuvB family. As to quaternary structure, homohexamer. Forms an RuvA(8)-RuvB(12)-Holliday junction (HJ) complex. HJ DNA is sandwiched between 2 RuvA tetramers; dsDNA enters through RuvA and exits via RuvB. An RuvB hexamer assembles on each DNA strand where it exits the tetramer. Each RuvB hexamer is contacted by two RuvA subunits (via domain III) on 2 adjacent RuvB subunits; this complex drives branch migration. In the full resolvosome a probable DNA-RuvA(4)-RuvB(12)-RuvC(2) complex forms which resolves the HJ.

The protein localises to the cytoplasm. It carries out the reaction ATP + H2O = ADP + phosphate + H(+). Functionally, the RuvA-RuvB-RuvC complex processes Holliday junction (HJ) DNA during genetic recombination and DNA repair, while the RuvA-RuvB complex plays an important role in the rescue of blocked DNA replication forks via replication fork reversal (RFR). RuvA specifically binds to HJ cruciform DNA, conferring on it an open structure. The RuvB hexamer acts as an ATP-dependent pump, pulling dsDNA into and through the RuvAB complex. RuvB forms 2 homohexamers on either side of HJ DNA bound by 1 or 2 RuvA tetramers; 4 subunits per hexamer contact DNA at a time. Coordinated motions by a converter formed by DNA-disengaged RuvB subunits stimulates ATP hydrolysis and nucleotide exchange. Immobilization of the converter enables RuvB to convert the ATP-contained energy into a lever motion, pulling 2 nucleotides of DNA out of the RuvA tetramer per ATP hydrolyzed, thus driving DNA branch migration. The RuvB motors rotate together with the DNA substrate, which together with the progressing nucleotide cycle form the mechanistic basis for DNA recombination by continuous HJ branch migration. Branch migration allows RuvC to scan DNA until it finds its consensus sequence, where it cleaves and resolves cruciform DNA. The protein is Holliday junction branch migration complex subunit RuvB of Shewanella sp. (strain MR-4).